The primary structure comprises 577 residues: Arginine--tRNA ligase (577 aa).

The short motif at 123-133 is the 'HIGH' region element; that stretch reads PNLAKEMHVGH.

It belongs to the class-I aminoacyl-tRNA synthetase family. Monomer.

It is found in the cytoplasm. It catalyses the reaction tRNA(Arg) + L-arginine + ATP = L-arginyl-tRNA(Arg) + AMP + diphosphate. This Marinomonas sp. (strain MWYL1) protein is Arginine--tRNA ligase.